The chain runs to 354 residues: Protein RecA (354 aa).

67 to 74 lines the ATP pocket; it reads GPESSGKT.

This sequence belongs to the RecA family.

Its subcellular location is the cytoplasm. Its function is as follows. Can catalyze the hydrolysis of ATP in the presence of single-stranded DNA, the ATP-dependent uptake of single-stranded DNA by duplex DNA, and the ATP-dependent hybridization of homologous single-stranded DNAs. It interacts with LexA causing its activation and leading to its autocatalytic cleavage. This chain is Protein RecA, found in Serratia marcescens.